The chain runs to 156 residues: Small ribosomal subunit protein uS7 (156 aa).

Belongs to the universal ribosomal protein uS7 family. In terms of assembly, part of the 30S ribosomal subunit. Contacts proteins S9 and S11.

Its function is as follows. One of the primary rRNA binding proteins, it binds directly to 16S rRNA where it nucleates assembly of the head domain of the 30S subunit. Is located at the subunit interface close to the decoding center, probably blocks exit of the E-site tRNA. The polypeptide is Small ribosomal subunit protein uS7 (Ruminiclostridium cellulolyticum (strain ATCC 35319 / DSM 5812 / JCM 6584 / H10) (Clostridium cellulolyticum)).